A 507-amino-acid polypeptide reads, in one-letter code: Histidine ammonia-lyase (507 aa).

The segment at residues 143 to 145 (ASG) is a cross-link (5-imidazolinone (Ala-Gly)). At Ser-144 the chain carries 2,3-didehydroalanine (Ser).

It belongs to the PAL/histidase family. Contains an active site 4-methylidene-imidazol-5-one (MIO), which is formed autocatalytically by cyclization and dehydration of residues Ala-Ser-Gly.

Its subcellular location is the cytoplasm. The enzyme catalyses L-histidine = trans-urocanate + NH4(+). Its pathway is amino-acid degradation; L-histidine degradation into L-glutamate; N-formimidoyl-L-glutamate from L-histidine: step 1/3. The protein is Histidine ammonia-lyase of Alkaliphilus oremlandii (strain OhILAs) (Clostridium oremlandii (strain OhILAs)).